A 68-amino-acid chain; its full sequence is Peptide Smp13 (68 aa).

The first 23 residues, 1 to 23 (MKTQFAIFLITLVLFQMFSQSDA), serve as a signal peptide directing secretion. A Phenylalanine amide modification is found at F36. The propeptide occupies 37-68 (GKRGLGDHDDLDELFDGEISQADIDFLKEIMQ).

Belongs to the non-disulfide-bridged peptide (NDBP) superfamily. Short antimicrobial peptide (group 4) family. As to expression, expressed by the venom gland.

The protein localises to the secreted. Peptide with unknown function. Does not show antimicrobial activity against the Gram-positive, and Gram-negative bacteria tested, as well as against the fungus C.albicans. This Scorpio palmatus (Israeli golden scorpion) protein is Peptide Smp13.